Consider the following 541-residue polypeptide: Interleukin-18 receptor 1 (541 aa).

Positions 1 to 18 (MNCRELPLTLWVLISVST) are cleaved as a signal peptide. Disulfide bonds link cysteine 22-cysteine 41 and cysteine 43-cysteine 81. Residues 22 to 329 (CTSRPHITVV…ADIPGHVFTR (308 aa)) lie on the Extracellular side of the membrane. 3 consecutive Ig-like C2-type domains span residues 33 to 121 (GEPF…SCFT), 133 to 212 (KKFF…DRSN), and 220 to 312 (PKLN…KSFI). Residues asparagine 91, asparagine 102, asparagine 150, asparagine 197, asparagine 203, asparagine 236, asparagine 255, and asparagine 297 are each glycosylated (N-linked (GlcNAc...) asparagine). 2 disulfide bridges follow: cysteine 119/cysteine 158 and cysteine 140/cysteine 185. Cysteines 237 and 298 form a disulfide. A helical transmembrane segment spans residues 330–350 (GMIIAVLILVAVVCLVTVCVI). Residues 351–541 (YRVDLVLFYR…PEVLPVLSES (191 aa)) lie on the Cytoplasmic side of the membrane. The 148-residue stretch at 373 to 520 (KTYDAFVSYL…RFWKNLLYLM (148 aa)) folds into the TIR domain. Residue glutamate 455 is part of the active site.

This sequence belongs to the interleukin-1 receptor family. In terms of assembly, forms a ternary complex with IL18 and IL18RAP. Within this complex, IL18R1 is involved in ligand-binding and IL18RAP in signaling leading to NF-kappa-B and JNK activation. Interacts with SLC12A3 in peritoneal macrophages; this interaction is increased by IL18 treatment. N-glycosylated. N-linked glycosyl chains contribute to ligand recognition and intra-receptor interactions required for formation of an active ternary receptor complex. In terms of tissue distribution, highly expressed in leukocytes, spleen, lung. Also expressed, but at lower levels, in liver, small intestine, colon, prostate, thymus, placenta, and heart. Specifically coexpressed with IL18R1 in Th1 cells.

It is found in the membrane. It catalyses the reaction NAD(+) + H2O = ADP-D-ribose + nicotinamide + H(+). Within the IL18 receptor complex, responsible for the binding of the pro-inflammatory cytokine IL18, but not IL1A nor IL1B. Involved in IL18-mediated IFNG synthesis from T-helper 1 (Th1) cells. Contributes to IL18-induced cytokine production, either independently of SLC12A3, or as a complex with SLC12A3. The chain is Interleukin-18 receptor 1 from Homo sapiens (Human).